A 460-amino-acid chain; its full sequence is MALNVVILAAGKGTRMRSDLPKVLHPIAHKSMVQHVIDTAHKVGSDAIQLVYGYGADKLKASLGEQQLNWVLQAEQLGTGHAVAQASPHIADNDTVLILYGDVPLIQQSTLEALLAARPENGVAILTVNLANPMGYGRIVRTPCEGQEQGKVIGIIEQKDATAEQLLINEINTGIMAVPGKQLKAWLSRLSNNNAQGEYYLTDIIAMAHADGVAIDTAQPQSAIEVEGANNRVQLAQLERAYQAREAEKLMLAGANLRDPSRIDIRGDVTVGMDVMIDINVIFEGKVTLGNNVTIGAGAILIDCEIADNAEIKPYSIIEGAKLGVAASAGPFARLRPGAELKQDAHIGNFVEVKKAVIGVGSKAGHLAYLGDAIIGDGVNIGAGTITCNYDGANKHLTVIEDNVFVGSDTQLVAPVTIGKGATLGAGSTITRDVGENELVITRVKQKHLTGWQRPVKIKK.

A pyrophosphorylase region spans residues 1–232 (MALNVVILAA…AIEVEGANNR (232 aa)). UDP-N-acetyl-alpha-D-glucosamine-binding positions include 8–11 (LAAG), Lys22, Gln73, 78–79 (GT), 100–102 (YGD), Gly137, Glu157, Asn172, and Asn230. Mg(2+) is bound at residue Asp102. Asn230 is a Mg(2+) binding site. The interval 233 to 253 (VQLAQLERAYQAREAEKLMLA) is linker. The N-acetyltransferase stretch occupies residues 254–460 (GANLRDPSRI…GWQRPVKIKK (207 aa)). Arg336 and Lys354 together coordinate UDP-N-acetyl-alpha-D-glucosamine. His366 serves as the catalytic Proton acceptor. UDP-N-acetyl-alpha-D-glucosamine-binding residues include Tyr369 and Asn380. Acetyl-CoA is bound by residues Ala383, 389–390 (NY), Ser408, Ala426, and Arg443.

In the N-terminal section; belongs to the N-acetylglucosamine-1-phosphate uridyltransferase family. The protein in the C-terminal section; belongs to the transferase hexapeptide repeat family. In terms of assembly, homotrimer. Requires Mg(2+) as cofactor.

It is found in the cytoplasm. The catalysed reaction is alpha-D-glucosamine 1-phosphate + acetyl-CoA = N-acetyl-alpha-D-glucosamine 1-phosphate + CoA + H(+). The enzyme catalyses N-acetyl-alpha-D-glucosamine 1-phosphate + UTP + H(+) = UDP-N-acetyl-alpha-D-glucosamine + diphosphate. Its pathway is nucleotide-sugar biosynthesis; UDP-N-acetyl-alpha-D-glucosamine biosynthesis; N-acetyl-alpha-D-glucosamine 1-phosphate from alpha-D-glucosamine 6-phosphate (route II): step 2/2. It functions in the pathway nucleotide-sugar biosynthesis; UDP-N-acetyl-alpha-D-glucosamine biosynthesis; UDP-N-acetyl-alpha-D-glucosamine from N-acetyl-alpha-D-glucosamine 1-phosphate: step 1/1. The protein operates within bacterial outer membrane biogenesis; LPS lipid A biosynthesis. In terms of biological role, catalyzes the last two sequential reactions in the de novo biosynthetic pathway for UDP-N-acetylglucosamine (UDP-GlcNAc). The C-terminal domain catalyzes the transfer of acetyl group from acetyl coenzyme A to glucosamine-1-phosphate (GlcN-1-P) to produce N-acetylglucosamine-1-phosphate (GlcNAc-1-P), which is converted into UDP-GlcNAc by the transfer of uridine 5-monophosphate (from uridine 5-triphosphate), a reaction catalyzed by the N-terminal domain. The chain is Bifunctional protein GlmU from Shewanella baltica (strain OS195).